Here is a 248-residue protein sequence, read N- to C-terminus: 2,3-bisphosphoglycerate-dependent phosphoglycerate mutase (248 aa).

Residues 10 to 17, 23 to 24, arginine 62, 89 to 92, lysine 100, 116 to 117, and 183 to 184 contribute to the substrate site; these read RHGQSQWN, TG, ERHY, RR, and GN. The active-site Tele-phosphohistidine intermediate is the histidine 11. The Proton donor/acceptor role is filled by glutamate 89.

It belongs to the phosphoglycerate mutase family. BPG-dependent PGAM subfamily.

The enzyme catalyses (2R)-2-phosphoglycerate = (2R)-3-phosphoglycerate. Its pathway is carbohydrate degradation; glycolysis; pyruvate from D-glyceraldehyde 3-phosphate: step 3/5. Catalyzes the interconversion of 2-phosphoglycerate and 3-phosphoglycerate. This chain is 2,3-bisphosphoglycerate-dependent phosphoglycerate mutase, found in Corynebacterium kroppenstedtii (strain DSM 44385 / JCM 11950 / CIP 105744 / CCUG 35717).